A 98-amino-acid chain; its full sequence is NADH-ubiquinone oxidoreductase chain 4L (98 aa).

3 consecutive transmembrane segments (helical) span residues methionine 1 to threonine 21, serine 28 to isoleucine 48, and leucine 61 to isoleucine 81.

Belongs to the complex I subunit 4L family. In terms of assembly, core subunit of respiratory chain NADH dehydrogenase (Complex I) which is composed of 45 different subunits.

Its subcellular location is the mitochondrion inner membrane. The enzyme catalyses a ubiquinone + NADH + 5 H(+)(in) = a ubiquinol + NAD(+) + 4 H(+)(out). Functionally, core subunit of the mitochondrial membrane respiratory chain NADH dehydrogenase (Complex I) which catalyzes electron transfer from NADH through the respiratory chain, using ubiquinone as an electron acceptor. Part of the enzyme membrane arm which is embedded in the lipid bilayer and involved in proton translocation. This chain is NADH-ubiquinone oxidoreductase chain 4L (MT-ND4L), found in Monodelphis domestica (Gray short-tailed opossum).